A 206-amino-acid chain; its full sequence is Small ribosomal subunit protein uS4 (206 aa).

An S4 RNA-binding domain is found at threonine 96 to isoleucine 156.

This sequence belongs to the universal ribosomal protein uS4 family. In terms of assembly, part of the 30S ribosomal subunit. Contacts protein S5. The interaction surface between S4 and S5 is involved in control of translational fidelity.

Its function is as follows. One of the primary rRNA binding proteins, it binds directly to 16S rRNA where it nucleates assembly of the body of the 30S subunit. Functionally, with S5 and S12 plays an important role in translational accuracy. In Colwellia psychrerythraea (strain 34H / ATCC BAA-681) (Vibrio psychroerythus), this protein is Small ribosomal subunit protein uS4.